A 614-amino-acid chain; its full sequence is Translation initiation factor IF-2 (614 aa).

The 169-residue stretch at 115–283 (ARAPIVTIMG…ILLIAELNDY (169 aa)) folds into the tr-type G domain. Residues 124-131 (GHVDHGKT) form a G1 region. 124-131 (GHVDHGKT) lines the GTP pocket. Residues 149 to 153 (GITQH) form a G2 region. Residues 170–173 (DTPG) are G3. Residues 170–174 (DTPGH) and 224–227 (NKMD) contribute to the GTP site. A G4 region spans residues 224 to 227 (NKMD). The interval 260–262 (SAL) is G5.

The protein belongs to the TRAFAC class translation factor GTPase superfamily. Classic translation factor GTPase family. IF-2 subfamily.

The protein resides in the cytoplasm. Functionally, one of the essential components for the initiation of protein synthesis. Protects formylmethionyl-tRNA from spontaneous hydrolysis and promotes its binding to the 30S ribosomal subunits. Also involved in the hydrolysis of GTP during the formation of the 70S ribosomal complex. This chain is Translation initiation factor IF-2, found in Ureaplasma urealyticum serovar 10 (strain ATCC 33699 / Western).